Reading from the N-terminus, the 339-residue chain is Phosphoribosylformylglycinamidine cyclo-ligase (339 aa).

Belongs to the AIR synthase family.

The protein localises to the cytoplasm. The catalysed reaction is 2-formamido-N(1)-(5-O-phospho-beta-D-ribosyl)acetamidine + ATP = 5-amino-1-(5-phospho-beta-D-ribosyl)imidazole + ADP + phosphate + H(+). It functions in the pathway purine metabolism; IMP biosynthesis via de novo pathway; 5-amino-1-(5-phospho-D-ribosyl)imidazole from N(2)-formyl-N(1)-(5-phospho-D-ribosyl)glycinamide: step 2/2. The polypeptide is Phosphoribosylformylglycinamidine cyclo-ligase (Streptococcus thermophilus (strain ATCC BAA-491 / LMD-9)).